We begin with the raw amino-acid sequence, 252 residues long: 5-oxoprolinase subunit A (252 aa).

The protein belongs to the LamB/PxpA family. As to quaternary structure, forms a complex composed of PxpA, PxpB and PxpC.

The catalysed reaction is 5-oxo-L-proline + ATP + 2 H2O = L-glutamate + ADP + phosphate + H(+). Functionally, catalyzes the cleavage of 5-oxoproline to form L-glutamate coupled to the hydrolysis of ATP to ADP and inorganic phosphate. The polypeptide is 5-oxoprolinase subunit A (Mycobacterium ulcerans (strain Agy99)).